The primary structure comprises 611 residues: Dihydroxy-acid dehydratase (611 aa).

Position 81 (Asp81) interacts with Mg(2+). Residue Cys122 coordinates [2Fe-2S] cluster. Asp123 and Lys124 together coordinate Mg(2+). Lys124 is modified (N6-carboxylysine). [2Fe-2S] cluster is bound at residue Cys195. A Mg(2+)-binding site is contributed by Glu491. Ser517 functions as the Proton acceptor in the catalytic mechanism.

Belongs to the IlvD/Edd family. In terms of assembly, homodimer. [2Fe-2S] cluster serves as cofactor. Requires Mg(2+) as cofactor.

The catalysed reaction is (2R)-2,3-dihydroxy-3-methylbutanoate = 3-methyl-2-oxobutanoate + H2O. It catalyses the reaction (2R,3R)-2,3-dihydroxy-3-methylpentanoate = (S)-3-methyl-2-oxopentanoate + H2O. The protein operates within amino-acid biosynthesis; L-isoleucine biosynthesis; L-isoleucine from 2-oxobutanoate: step 3/4. It participates in amino-acid biosynthesis; L-valine biosynthesis; L-valine from pyruvate: step 3/4. Its function is as follows. Functions in the biosynthesis of branched-chain amino acids. Catalyzes the dehydration of (2R,3R)-2,3-dihydroxy-3-methylpentanoate (2,3-dihydroxy-3-methylvalerate) into 2-oxo-3-methylpentanoate (2-oxo-3-methylvalerate) and of (2R)-2,3-dihydroxy-3-methylbutanoate (2,3-dihydroxyisovalerate) into 2-oxo-3-methylbutanoate (2-oxoisovalerate), the penultimate precursor to L-isoleucine and L-valine, respectively. The polypeptide is Dihydroxy-acid dehydratase (Allorhizobium ampelinum (strain ATCC BAA-846 / DSM 112012 / S4) (Agrobacterium vitis (strain S4))).